The primary structure comprises 270 residues: Glutamate 5-kinase (270 aa).

Lysine 17 serves as a coordination point for ATP. Residues serine 57, aspartate 144, and asparagine 160 each coordinate substrate. ATP-binding positions include 180 to 181 (SD) and 222 to 228 (TGGMTSK).

The protein belongs to the glutamate 5-kinase family.

Its subcellular location is the cytoplasm. The enzyme catalyses L-glutamate + ATP = L-glutamyl 5-phosphate + ADP. It functions in the pathway amino-acid biosynthesis; L-proline biosynthesis; L-glutamate 5-semialdehyde from L-glutamate: step 1/2. Functionally, catalyzes the transfer of a phosphate group to glutamate to form L-glutamate 5-phosphate. This is Glutamate 5-kinase from Lactococcus lactis subsp. lactis (strain IL1403) (Streptococcus lactis).